A 558-amino-acid polypeptide reads, in one-letter code: NAD(P)H-quinone oxidoreductase chain 4 (558 aa).

Helical transmembrane passes span 25–45 (FPWL…VPFI), 56–76 (WYAL…YLKG), 111–131 (LILL…PVSF), 133–153 (PKLF…VFAV), 157–177 (LLFF…LAIW), 189–209 (FIIY…AMGF), 230–250 (GFQL…LPVV), 264–284 (TAPV…YALL), 298–318 (FAPL…LTSF), 327–347 (IAYS…SFSS), 353–373 (AMLQ…LVGA), 395–417 (IMFA…SGFV), 438–458 (IVIA…LLSM), and 485–505 (IYVI…PRIM).

It belongs to the complex I subunit 4 family.

The protein localises to the cellular thylakoid membrane. The enzyme catalyses a plastoquinone + NADH + (n+1) H(+)(in) = a plastoquinol + NAD(+) + n H(+)(out). It carries out the reaction a plastoquinone + NADPH + (n+1) H(+)(in) = a plastoquinol + NADP(+) + n H(+)(out). NDH-1 shuttles electrons from NAD(P)H, via FMN and iron-sulfur (Fe-S) centers, to quinones in the respiratory chain. The immediate electron acceptor for the enzyme in this species is believed to be plastoquinone. Couples the redox reaction to proton translocation (for every two electrons transferred, four hydrogen ions are translocated across the cytoplasmic membrane), and thus conserves the redox energy in a proton gradient. This is NAD(P)H-quinone oxidoreductase chain 4 from Prochlorococcus marinus (strain MIT 9211).